The chain runs to 231 residues: Nuclear transcription factor Y subunit C-9 (231 aa).

A disordered region spans residues 211-231; the sequence is NPYMGQPMWQQQAPDQPDQEN.

This sequence belongs to the NFYC/HAP5 subunit family. Heterotrimeric transcription factor composed of three components, NF-YA, NF-YB and NF-YC. Interacts with NFYA2, NFYB2, CO and RGA. Interacts with REF6 (via N-terminus). In terms of tissue distribution, ubiquitous. Present in etiolated seedlings.

It localises to the nucleus. Functionally, stimulates the transcription of various genes by recognizing and binding to a CCAAT motif in promoters. Interacts with REF6 to directly regulate SOC1 transcription in response to flowering signals from photoperiod and gibberellic acid pathways. The chain is Nuclear transcription factor Y subunit C-9 (NFYC9) from Arabidopsis thaliana (Mouse-ear cress).